Consider the following 151-residue polypeptide: Lipoprotein signal peptidase (151 aa).

The next 2 helical transmembrane spans lie at 54–74 (GQMW…IYLI) and 83–103 (LLKI…IDRL). Catalysis depends on residues Asp110 and Asp125. The helical transmembrane segment at 120–140 (IFNIADSALTIGVGLFLLNIL) threads the bilayer.

Belongs to the peptidase A8 family.

The protein localises to the cell membrane. It carries out the reaction Release of signal peptides from bacterial membrane prolipoproteins. Hydrolyzes -Xaa-Yaa-Zaa-|-(S,diacylglyceryl)Cys-, in which Xaa is hydrophobic (preferably Leu), and Yaa (Ala or Ser) and Zaa (Gly or Ala) have small, neutral side chains.. It functions in the pathway protein modification; lipoprotein biosynthesis (signal peptide cleavage). In terms of biological role, this protein specifically catalyzes the removal of signal peptides from prolipoproteins. This Shouchella clausii (strain KSM-K16) (Alkalihalobacillus clausii) protein is Lipoprotein signal peptidase.